A 445-amino-acid chain; its full sequence is Hydroxymethylglutaryl-CoA synthase (445 aa).

Asp31 provides a ligand contact to (3S)-3-hydroxy-3-methylglutaryl-CoA. Residue Glu83 is the Proton donor/acceptor of the active site. Residues Cys120, Thr163, Ser211, His244, Lys253, Asn328, and Ser364 each contribute to the (3S)-3-hydroxy-3-methylglutaryl-CoA site. The active-site Acyl-thioester intermediate is Cys120. His244 serves as the catalytic Proton donor/acceptor.

This sequence belongs to the thiolase-like superfamily. HMG-CoA synthase family.

It carries out the reaction acetoacetyl-CoA + acetyl-CoA + H2O = (3S)-3-hydroxy-3-methylglutaryl-CoA + CoA + H(+). It functions in the pathway metabolic intermediate biosynthesis; (R)-mevalonate biosynthesis; (R)-mevalonate from acetyl-CoA: step 2/3. In contrast to bacterial and eukaryotic HMG-CoA synthases, is insensitive to feedback substrate inhibition by acetoacetyl-CoA. Enzymatic activity is inhibited by hymeglusin, which also blocks the propagation of H.volcanii cells in vivo, indicating the critical role that the mevalonate pathway plays in isoprenoid biosynthesis by these archaea. Functionally, catalyzes the condensation of acetyl-CoA with acetoacetyl-CoA to form 3-hydroxy-3-methylglutaryl-CoA (HMG-CoA). Functions in the mevalonate (MVA) pathway leading to isopentenyl diphosphate (IPP), a key precursor for the biosynthesis of isoprenoid compounds such as archaeal membrane lipids. This is Hydroxymethylglutaryl-CoA synthase (hmgB) from Haloferax volcanii (strain ATCC 29605 / DSM 3757 / JCM 8879 / NBRC 14742 / NCIMB 2012 / VKM B-1768 / DS2) (Halobacterium volcanii).